The chain runs to 388 residues: AdoMet-dependent heme synthase (388 aa).

Over residues 1–12 (MHNANHPHGNGH) the composition is skewed to low complexity. A disordered region spans residues 1–29 (MHNANHPHGNGHPAEKKGMGAHSGAMNMP). The 224-residue stretch at 34 to 257 (DGSPACRLIA…TSMHLKATCA (224 aa)) folds into the Radical SAM core domain. [4Fe-4S] cluster contacts are provided by Cys-50, Cys-54, and Cys-57.

The protein belongs to the radical SAM superfamily. It depends on [4Fe-4S] cluster as a cofactor.

It carries out the reaction Fe-coproporphyrin III + 2 S-adenosyl-L-methionine = heme b + 2 5'-deoxyadenosine + 2 L-methionine + 2 CO2. It participates in porphyrin-containing compound metabolism; protoheme biosynthesis. Functionally, involved in siroheme-dependent heme b biosynthesis. Catalyzes the conversion of Fe-coproporphyrin III into heme by the oxidative decarboxylation of two propionate side chains. This is AdoMet-dependent heme synthase from Oleidesulfovibrio alaskensis (strain ATCC BAA-1058 / DSM 17464 / G20) (Desulfovibrio alaskensis).